Here is a 313-residue protein sequence, read N- to C-terminus: Formimidoylglutamase (313 aa).

Residues H130, D155, H157, D159, D241, and D243 each coordinate Mn(2+).

Belongs to the arginase family. It depends on Mn(2+) as a cofactor.

It catalyses the reaction N-formimidoyl-L-glutamate + H2O = formamide + L-glutamate. The protein operates within amino-acid degradation; L-histidine degradation into L-glutamate; L-glutamate from N-formimidoyl-L-glutamate (hydrolase route): step 1/1. Catalyzes the conversion of N-formimidoyl-L-glutamate to L-glutamate and formamide. This is Formimidoylglutamase from Salmonella choleraesuis (strain SC-B67).